A 293-amino-acid polypeptide reads, in one-letter code: tRNA pseudouridine synthase B (293 aa).

Aspartate 39 (nucleophile) is an active-site residue.

This sequence belongs to the pseudouridine synthase TruB family. Type 1 subfamily.

The enzyme catalyses uridine(55) in tRNA = pseudouridine(55) in tRNA. Its function is as follows. Responsible for synthesis of pseudouridine from uracil-55 in the psi GC loop of transfer RNAs. This Streptococcus mutans serotype c (strain ATCC 700610 / UA159) protein is tRNA pseudouridine synthase B.